The following is a 314-amino-acid chain: Olfactory receptor 9I1 (314 aa).

Residues 1–25 (MAKNNLTRVTEFILMGFMDHPKLEI) are Extracellular-facing. Asn-5 carries N-linked (GlcNAc...) asparagine glycosylation. Residues 26 to 46 (PLFLVFLSFYLVTLLGNVGMI) traverse the membrane as a helical segment. The Cytoplasmic portion of the chain corresponds to 47-54 (MLIQVDVK). Residues 55–75 (LYTPMYFFLSHLSLLDACYTS) form a helical membrane-spanning segment. Over 76 to 99 (VITPQILATLATGKTVISYGHCAA) the chain is Extracellular. A disulfide bond links Cys-97 and Cys-189. The chain crosses the membrane as a helical span at residues 100–120 (QFFLFTICAGTECFLLAVMAY). Over 121–139 (DRYAAIRNPLLYTVAMNPR) the chain is Cytoplasmic. The chain crosses the membrane as a helical span at residues 140–160 (LCWSLVVGAYVCGVSGAILRT). At 161 to 197 (TCTFTLSFCKDNQINFFFCDLPPLLKLACSDTANIEI) the chain is on the extracellular side. A helical transmembrane segment spans residues 198-217 (VIIFFGNFVILANASVILIS). Residues 218–237 (YLLIIKTILKVKSSGGRAKT) lie on the Cytoplasmic side of the membrane. A helical membrane pass occupies residues 238-258 (FSTCASHITAVALFFGALIFM). At 259–271 (YLQSGSGKSLEED) the chain is on the extracellular side. A helical membrane pass occupies residues 272 to 292 (KVVSVFYTVVIPMLNPLIYSL). Residues 293–314 (RNKDVKDAFRKVARRLQVSLSM) lie on the Cytoplasmic side of the membrane.

Belongs to the G-protein coupled receptor 1 family.

The protein resides in the cell membrane. Odorant receptor. This chain is Olfactory receptor 9I1 (OR9I1), found in Homo sapiens (Human).